Consider the following 145-residue polypeptide: Protein SprT-like (145 aa).

The SprT-like domain maps to 5–141; sequence NYVKQVSVED…CGRCMGKLRL (137 aa). Residue His64 coordinates Zn(2+). Glu65 is a catalytic residue. Residue His68 participates in Zn(2+) binding.

The protein belongs to the SprT family. The cofactor is Zn(2+).

It is found in the cytoplasm. In Streptococcus sanguinis (strain SK36), this protein is Protein SprT-like.